Here is a 738-residue protein sequence, read N- to C-terminus: Polyribonucleotide nucleotidyltransferase (738 aa).

Positions 528 and 534 each coordinate Mg(2+). Positions 594–653 (PRVVRVKIPVQKIGELIGPKGKVINSIQDETGAEISIEDDGTVYIGSSQADSSEKAVAMV) constitute a KH domain. The 73-residue stretch at 665–737 (GSQFLGTVVK…DRGKLCLVAV (73 aa)) folds into the S1 motif domain.

It belongs to the polyribonucleotide nucleotidyltransferase family. It depends on Mg(2+) as a cofactor.

Its subcellular location is the cytoplasm. The catalysed reaction is RNA(n+1) + phosphate = RNA(n) + a ribonucleoside 5'-diphosphate. Its function is as follows. Involved in mRNA degradation. Catalyzes the phosphorolysis of single-stranded polyribonucleotides processively in the 3'- to 5'-direction. The sequence is that of Polyribonucleotide nucleotidyltransferase from Tropheryma whipplei (strain Twist) (Whipple's bacillus).